We begin with the raw amino-acid sequence, 128 residues long: Con-Ins F2b (128 aa).

The signal sequence occupies residues 1 to 24; that stretch reads MTTSSYFLLVALGLLLYVCRSSFG. 4 disulfides stabilise this stretch: Cys-29-Cys-104, Cys-41-Cys-107, Cys-53-Cys-120, and Cys-106-Cys-111. The propeptide at 59-89 is c peptide; the sequence is LQGGTGKKRGRASLLRKRRAFLSMLKARAKR. Glu-115 is subject to 4-carboxyglutamate; partial. Residue Ser-127 is modified to Serine amide.

This sequence belongs to the insulin family. In terms of assembly, heterodimer of A and B chains; disulfide-linked. As to expression, expressed by the venom gland.

The protein resides in the secreted. Its function is as follows. This venom insulin facilitates prey capture by rapidly inducing hypoglycemic shock. Intraperitoneal injection of this peptide into zebrafish lowers blood glucose with the same potency than human insulin. In vivo, when applied to water, this peptide reduces overall locomotor activity of zebrafish larvae, observed as a significant decrease in the percentage of time spent swimming and movement frequency. The chain is Con-Ins F2b from Conus floridulus (Cone snail).